Reading from the N-terminus, the 353-residue chain is MTSAIAVDPKAAKPVGVTAGHAPAGAGKVGVLLVNLGTPDGTEFKPMWRYLREFLSDPRVIELNKAIWYPILYGLVLTTRPKKSGANYARIWNQERNESPLRTYTRAQSEKLAEALGDLPDVTVDWAMRYGNPSTASVAERLVAQGCDRILSFPLYPQYSATTTATANDQLFRALMKLRRAPAIRSVPPYYAEPVYIEALASSIERHLATLDFEPEVVITSYHGIPKPYSDKGDPYQAHCLETTRLLREKLGWDEKKLITTFQSRFGAQEWLQPYTDKTVEKLGKDGVKSIAIVNPGFSVDCIETLDEIGREAAETFHHAGGKNFAHIPCLNDSAEGMTVIEAMVRRELSGWV.

Residues H223 and E304 each coordinate Fe cation.

The protein belongs to the ferrochelatase family.

The protein localises to the cytoplasm. The enzyme catalyses heme b + 2 H(+) = protoporphyrin IX + Fe(2+). It participates in porphyrin-containing compound metabolism; protoheme biosynthesis; protoheme from protoporphyrin-IX: step 1/1. Functionally, catalyzes the ferrous insertion into protoporphyrin IX. The chain is Ferrochelatase from Mesorhizobium japonicum (strain LMG 29417 / CECT 9101 / MAFF 303099) (Mesorhizobium loti (strain MAFF 303099)).